A 226-amino-acid chain; its full sequence is V-type proton ATPase subunit E (226 aa).

It belongs to the V-ATPase E subunit family. In terms of assembly, V-ATPase is a heteromultimeric enzyme composed of a peripheral catalytic V1 complex (components A to H) attached to an integral membrane V0 proton pore complex (components: a, c, c', c'' and d).

Functionally, subunit of the peripheral V1 complex of vacuolar ATPase essential for assembly or catalytic function. V-ATPase is responsible for acidifying a variety of intracellular compartments in eukaryotic cells. The protein is V-type proton ATPase subunit E (VATE) of Mesembryanthemum crystallinum (Common ice plant).